The sequence spans 549 residues: Nucleoporin nup61 (549 aa).

The span at 1–32 (MSKRGADHQLTKDQDDSDDDRHGPVEVPKEAS) shows a compositional bias: basic and acidic residues. Disordered stretches follow at residues 1–57 (MSKR…VSSP), 133–193 (IEKK…GFSA), and 207–438 (FTPK…NEDS). Residue serine 17 is modified to Phosphoserine. The segment covering 40–50 (KIAKPKSRKRP) has biased composition (basic residues). A compositionally biased stretch (polar residues) spans 141 to 165 (QPTSNAVVSEVNPQQQKSQDSSSFV). 2 stretches are compositionally biased toward basic and acidic residues: residues 170–180 (ASSEKEDKEKP) and 217–228 (SATEAEAKEKET). A compositionally biased stretch (low complexity) spans 229–244 (SSNQTATGTAATTTNQ). Basic and acidic residues-rich tracts occupy residues 282-310 (ASKE…KSEN) and 328-339 (KPIKFDTPEKKF). At serine 347 the chain carries Phosphoserine. The segment covering 407-421 (SEQEEKENGNDETRS) has biased composition (basic and acidic residues). The region spanning 416 to 549 (NDETRSNDSL…NEKKVSKSEN (134 aa)) is the RanBD1 domain.

The protein localises to the nucleus. It is found in the nuclear pore complex. Functionally, functions as a component of the nuclear pore complex (NPC). NPC components, collectively referred to as nucleoporins (NUPs), can play the role of both NPC structural components and of docking or interaction partners for transiently associated nuclear transport factors. Active directional transport is assured by both, a Phe-Gly (FG) repeat affinity gradient for these transport factors across the NPC and a transport cofactor concentration gradient across the nuclear envelope. May play a role in mitotic spindle formation and/or function. In Schizosaccharomyces pombe (strain 972 / ATCC 24843) (Fission yeast), this protein is Nucleoporin nup61 (nup61).